Consider the following 225-residue polypeptide: Glucosyl-3-phosphoglycerate phosphatase (225 aa).

Position 10 (Arg-10) interacts with substrate. The Tele-phosphohistidine intermediate role is filled by His-11. Residue Arg-60 participates in substrate binding. Residue Glu-84 is the Proton donor/acceptor of the active site. His-158 contributes to the substrate binding site.

The protein belongs to the phosphoglycerate mutase family. As to quaternary structure, homodimer.

The catalysed reaction is (2R)-2-O-(alpha-D-glucopyranosyl)-3-phospho-glycerate + H2O = (2R)-2-O-(alpha-D-glucopyranosyl)-glycerate + phosphate. Its function is as follows. Involved in the biosynthesis of mycobacterial methylglucose lipopolysaccharides (MGLP). Catalyzes the dephosphorylation of glucosyl-3-phosphoglycerate (GPG) to glucosylglycerate. In Mycolicibacterium vanbaalenii (strain DSM 7251 / JCM 13017 / BCRC 16820 / KCTC 9966 / NRRL B-24157 / PYR-1) (Mycobacterium vanbaalenii), this protein is Glucosyl-3-phosphoglycerate phosphatase.